The following is a 1365-amino-acid chain: Patatin-like phospholipase domain-containing protein 6 (1365 aa).

The Lumenal segment spans residues 1–50 (MGTSSHGLATNSSGAKVAERDGFQDVPAPGEGAAGRICGAQPVPFVPQVL). A glycan (N-linked (GlcNAc...) asparagine) is linked at Asn11. A helical membrane pass occupies residues 51–71 (GVMIGAGVAVVVTAVLILLVV). Residues 72-1365 (RRLRVPKTPA…QEPPGSATDA (1294 aa)) are Cytoplasmic-facing. A nucleoside 3',5'-cyclic phosphate is bound at residue 186 to 313 (VLGHFEKPLF…VRVVQIIMVR (128 aa)). Disordered stretches follow at residues 343–427 (FPSP…RSDF) and 441–463 (QEGA…PREQ). Ser345 carries the post-translational modification Phosphoserine. Residues 350 to 367 (TRTSPVRGSKRMVSTSAT) are compositionally biased toward polar residues. Phosphothreonine is present on Thr352. 2 positions are modified to phosphoserine: Ser353 and Ser363. Residues 375 to 389 (GRPPDPTGAPLPGPT) are compositionally biased toward pro residues. The residue at position 411 (Ser411) is a Phosphoserine. Residue Thr455 is modified to Phosphothreonine. A nucleoside 3',5'-cyclic phosphate contacts are provided by residues 502 to 624 (ELAK…VAAR) and 620 to 740 (TVAA…LSQK). A PNPLA domain is found at 971–1137 (LVLGGGGARG…INNLPADIAR (167 aa)). A GXGXXG motif is present at residues 975-980 (GGGARG). Positions 1002-1006 (GTSIG) match the GXSXG motif. Ser1004 (nucleophile) is an active-site residue. Asp1124 (proton acceptor) is an active-site residue. The short motif at 1124–1126 (DGG) is the DGA/G element. A disordered region spans residues 1296 to 1365 (SYVSDGCADG…QEPPGSATDA (70 aa)). Positions 1303–1319 (ADGEESDCLTEYEEDAG) are enriched in acidic residues.

It belongs to the NTE family. Glycosylated.

It localises to the endoplasmic reticulum membrane. The catalysed reaction is a 1-acyl-sn-glycero-3-phosphocholine + H2O = sn-glycerol 3-phosphocholine + a fatty acid + H(+). It carries out the reaction 1-hexadecanoyl-sn-glycero-3-phosphocholine + H2O = sn-glycerol 3-phosphocholine + hexadecanoate + H(+). It catalyses the reaction 1-(9Z-octadecenoyl)-sn-glycero-3-phosphocholine + H2O = sn-glycerol 3-phosphocholine + (9Z)-octadecenoate + H(+). The enzyme catalyses 1-hexadecanoylglycerol + H2O = glycerol + hexadecanoate + H(+). The catalysed reaction is 2-hexadecanoylglycerol + H2O = glycerol + hexadecanoate + H(+). It carries out the reaction 1-(9Z-octadecenoyl)-glycerol + H2O = glycerol + (9Z)-octadecenoate + H(+). It catalyses the reaction 2-(9Z-octadecenoyl)-glycerol + H2O = glycerol + (9Z)-octadecenoate + H(+). The enzyme catalyses 2-(5Z,8Z,11Z,14Z-eicosatetraenoyl)-glycerol + H2O = glycerol + (5Z,8Z,11Z,14Z)-eicosatetraenoate + H(+). The catalysed reaction is 1-hexadecanoyl-sn-glycero-3-phosphate + H2O = sn-glycerol 3-phosphate + hexadecanoate + H(+). Inhibited by a series a OPs such as mipafox (MPX), phenyl saligenin phosphate (PSP), phenyl dipentyl phosphinate (PDPP), diisopropyl fluorophosphate and paraoxon. Functionally, phospholipase B that deacylates intracellular phosphatidylcholine (PtdCho), generating glycerophosphocholine (GroPtdCho). This deacylation occurs at both sn-2 and sn-1 positions of PtdCho. Catalyzes the hydrolysis of several naturally occurring membrane-associated lipids. Hydrolyzes lysophospholipids and monoacylglycerols, preferring the 1-acyl to the 2-acyl isomer. Does not catalyze hydrolysis of di- or triacylglycerols or fatty acid amides. This chain is Patatin-like phospholipase domain-containing protein 6 (PNPLA6), found in Pongo abelii (Sumatran orangutan).